The following is a 331-amino-acid chain: Nucleotide-binding protein SGR_5570 (331 aa).

Positions 1 to 43 are disordered; sequence MTENTHETAPNTADTDTADFDTADTDRADGAADVSTNTPNETG. Residue 55 to 62 participates in ATP binding; that stretch reads GMSGAGRS. 106-109 serves as a coordination point for GTP; that stretch reads DVRG.

It belongs to the RapZ-like family.

Its function is as follows. Displays ATPase and GTPase activities. The polypeptide is Nucleotide-binding protein SGR_5570 (Streptomyces griseus subsp. griseus (strain JCM 4626 / CBS 651.72 / NBRC 13350 / KCC S-0626 / ISP 5235)).